A 177-amino-acid chain; its full sequence is Large ribosomal subunit protein uL6 (177 aa).

Belongs to the universal ribosomal protein uL6 family. As to quaternary structure, part of the 50S ribosomal subunit.

In terms of biological role, this protein binds to the 23S rRNA, and is important in its secondary structure. It is located near the subunit interface in the base of the L7/L12 stalk, and near the tRNA binding site of the peptidyltransferase center. This is Large ribosomal subunit protein uL6 from Shewanella frigidimarina (strain NCIMB 400).